Consider the following 506-residue polypeptide: Cobyric acid synthase (506 aa).

One can recognise a GATase cobBQ-type domain in the interval 251–448 (DITIAIVQLP…LHGLFDSDAF (198 aa)). The active-site Nucleophile is the Cys-332. Residue His-440 is part of the active site.

Belongs to the CobB/CobQ family. CobQ subfamily.

It functions in the pathway cofactor biosynthesis; adenosylcobalamin biosynthesis. Functionally, catalyzes amidations at positions B, D, E, and G on adenosylcobyrinic A,C-diamide. NH(2) groups are provided by glutamine, and one molecule of ATP is hydrogenolyzed for each amidation. The chain is Cobyric acid synthase from Salmonella choleraesuis (strain SC-B67).